Consider the following 222-residue polypeptide: Coiled-coil domain-containing protein 70 (222 aa).

Residues Asn129–Trp153 are a coiled coil.

In Homo sapiens (Human), this protein is Coiled-coil domain-containing protein 70.